The sequence spans 199 residues: Probable thymidylate kinase (199 aa).

9–16 (GIDGCGKT) serves as a coordination point for ATP.

It belongs to the thymidylate kinase family.

The enzyme catalyses dTMP + ATP = dTDP + ADP. This chain is Probable thymidylate kinase, found in Methanococcus maripaludis (strain DSM 14266 / JCM 13030 / NBRC 101832 / S2 / LL).